Reading from the N-terminus, the 166-residue chain is KH homology domain-containing protein 1C (166 aa).

The KH; atypical domain maps to 19–78 (PLVFDMEEDKEDYIFGPHDEYLHTLEVHSNTLIQLERWFTPTGQTRVTVVGPLKARLWVM).

The protein belongs to the KHDC1 family.

The chain is KH homology domain-containing protein 1C (Khdc1c) from Mus musculus (Mouse).